The chain runs to 456 residues: Glutamate-gated chloride channel (456 aa).

Residues 1–22 form the signal peptide; that stretch reads MGSGHYFWAILYFASLCSASLA. The Extracellular segment spans residues 23–245; sequence NNAKINFREK…VDLLFKREFS (223 aa). L-glutamate contacts are provided by R71, R90, and S154. A disulfide bond links C163 and C177. Residue S183 coordinates L-glutamate. C222 and C233 are disulfide-bonded. The helical transmembrane segment at 246-268 threads the bilayer; it reads YYLIQIYIPCCMLVIVSWVSFWL. The Cytoplasmic segment spans residues 269 to 273; that stretch reads DQGAV. The chain crosses the membrane as a helical span at residues 274–295; it reads PARVSLGVTTLLTMATQTSGIN. The Extracellular portion of the chain corresponds to 296–302; the sequence is ASLPPVS. Residues 303 to 323 traverse the membrane as a helical segment; sequence YTKAIDVWTGVCLTFVFGALL. At 324-426 the chain is on the cytoplasmic side; sequence EFALVNYASR…RQCSRSKRID (103 aa). The chain crosses the membrane as a helical span at residues 427–450; that stretch reads VISRITFPLVFALFNLVYWSTYLF. At 451 to 456 the chain is on the extracellular side; that stretch reads REEEDE.

The protein belongs to the ligand-gated ion channel (TC 1.A.9) family. Glutamate-gated chloride channel (TC 1.A.9.4) subfamily. As to quaternary structure, pentamer. Homomultimer. Expressed in the medulla layers (at protein level). Expressed in all major ON pathway medulla neurons (Mi1, Tm3, Mi4, and Mi9) and in OFF pathway neurons (Tm1, Tm2, Tm4, and Tm9).

Its subcellular location is the postsynaptic cell membrane. The protein resides in the cell membrane. Glutamate binding triggers a rapidly reversible current, while the anti-helmintic drug ivermectin triggers a permanently open channel configuration. Inhibited by picrotoxin. Glutamate-gated chloride channel subunit. Together with Gamma-aminobutyric acid receptor Rdl, plays an important role in the visual response by regulating the activity of ON/OFF-selective neurons. This chain is Glutamate-gated chloride channel (GluClalpha), found in Drosophila melanogaster (Fruit fly).